Here is a 370-residue protein sequence, read N- to C-terminus: MPPSDPIIVLGAGVIGLTTAVRLLEAHLGANVHILADHWPSDALDAQYASTIAGAHHLSFADDGDARQRRWDMRTFDVLYDEWKAVGERTGLMALTQTEMWEGATSHLAVYEGNPDFRVLDPRTAPCSNITHMVSFTSLTIAPTVYLAALEARVRDLGAKLHRAHVPSLGALRTDPALLALYTRPPAAVFVCAGLGARHLVPAPEAAALFPTRGQVVVVRAPWMRAGFTRQVGSLGGGEGGTRTYIIPRCNGEVVLGGTMEQGDWTPYPRDETVTDILTRALQICPDIAPPYARSWPKDDQVAALRSIVVRDAVGFRPSRAGGARVALASAAGMRVVYNYGHGGAGWQSCWGCAEDAVALWAGGAGGARL.

The FAD site is built by Ile-15, Ala-49, Ser-50, Gly-54, Val-166, Arg-317, Gly-346, and Gln-348. A Microbody targeting signal motif is present at residues 368–370; sequence ARL.

It belongs to the DAMOX/DASOX family. In terms of assembly, homotetramer. The cofactor is FAD.

The protein localises to the peroxisome matrix. It carries out the reaction D-aspartate + O2 + H2O = oxaloacetate + H2O2 + NH4(+). The catalysed reaction is D-glutamate + O2 + H2O = H2O2 + 2-oxoglutarate + NH4(+). Its activity is regulated as follows. Inhibited by malonate and D-malate. Very mildly inhibited by benzoate, ethylenediaminetetraacetic acid (EDTA), crotonate and anthranilate. May be very mildly inhibited by meso-tartrate. Functionally, selectively catalyzes the oxidative deamination of acidic amino acids. Protects the organism from the toxicity of D-amino acids. Enables the organism to utilize D-amino acids as a source of nutrients. Enables the organism to utilize D-aspartate as a source of nitrogen and carbon. This is D-aspartate oxidase from Vanrija humicola (Yeast).